Reading from the N-terminus, the 424-residue chain is Tyrosine--tRNA ligase (424 aa).

Tyr-37 is an L-tyrosine binding site. The 'HIGH' region signature appears at 42–51 (PTADSLHLGH). 2 residues coordinate L-tyrosine: Tyr-175 and Gln-179. The short motif at 235 to 239 (KFGKT) is the 'KMSKS' region element. Lys-238 contributes to the ATP binding site. An S4 RNA-binding domain is found at 357 to 414 (ADLQQALVNAELVPSRGQARTMIGSNAVAINGEKQADPEYVFTDADRLFGRYTLLRRG).

Belongs to the class-I aminoacyl-tRNA synthetase family. TyrS type 1 subfamily. In terms of assembly, homodimer.

Its subcellular location is the cytoplasm. It carries out the reaction tRNA(Tyr) + L-tyrosine + ATP = L-tyrosyl-tRNA(Tyr) + AMP + diphosphate + H(+). In terms of biological role, catalyzes the attachment of tyrosine to tRNA(Tyr) in a two-step reaction: tyrosine is first activated by ATP to form Tyr-AMP and then transferred to the acceptor end of tRNA(Tyr). In Yersinia pestis bv. Antiqua (strain Antiqua), this protein is Tyrosine--tRNA ligase.